Reading from the N-terminus, the 470-residue chain is Ribulose bisphosphate carboxylase large chain (470 aa).

Position 5 is an N6,N6,N6-trimethyllysine (Lys5). Residues Asn114 and Thr164 each coordinate substrate. The active-site Proton acceptor is the Lys166. Lys168 is a binding site for substrate. Mg(2+)-binding residues include Lys192, Asp194, and Glu195. The residue at position 192 (Lys192) is an N6-carboxylysine. The active-site Proton acceptor is the His285. 3 residues coordinate substrate: Arg286, His318, and Ser370.

The protein belongs to the RuBisCO large chain family. Type I subfamily. In terms of assembly, heterohexadecamer of 8 large chains and 8 small chains; disulfide-linked. The disulfide link is formed within the large subunit homodimers. It depends on Mg(2+) as a cofactor. Post-translationally, the disulfide bond which can form in the large chain dimeric partners within the hexadecamer appears to be associated with oxidative stress and protein turnover.

The protein localises to the plastid. The protein resides in the chloroplast. The enzyme catalyses 2 (2R)-3-phosphoglycerate + 2 H(+) = D-ribulose 1,5-bisphosphate + CO2 + H2O. The catalysed reaction is D-ribulose 1,5-bisphosphate + O2 = 2-phosphoglycolate + (2R)-3-phosphoglycerate + 2 H(+). In terms of biological role, ruBisCO catalyzes two reactions: the carboxylation of D-ribulose 1,5-bisphosphate, the primary event in carbon dioxide fixation, as well as the oxidative fragmentation of the pentose substrate in the photorespiration process. Both reactions occur simultaneously and in competition at the same active site. The chain is Ribulose bisphosphate carboxylase large chain from Bertiera breviflora.